The primary structure comprises 176 residues: Translation initiation factor IF-3 (176 aa).

This sequence belongs to the IF-3 family. Monomer.

It localises to the cytoplasm. IF-3 binds to the 30S ribosomal subunit and shifts the equilibrium between 70S ribosomes and their 50S and 30S subunits in favor of the free subunits, thus enhancing the availability of 30S subunits on which protein synthesis initiation begins. The polypeptide is Translation initiation factor IF-3 (Streptococcus pyogenes serotype M4 (strain MGAS10750)).